Here is an 866-residue protein sequence, read N- to C-terminus: Probable beta-glucosidase F (866 aa).

A signal peptide spans 1–20 (MAAFPAYLALLSYLVPGALS). N-linked (GlcNAc...) asparagine glycans are attached at residues N65, N73, and N257. Residue D285 is part of the active site. 8 N-linked (GlcNAc...) asparagine glycosylation sites follow: N328, N360, N395, N421, N474, N659, N664, and N724. The interval 725–748 (SSKTYPYPDGYTTEPKPAPRAGGA) is disordered.

It belongs to the glycosyl hydrolase 3 family.

The protein localises to the secreted. The catalysed reaction is Hydrolysis of terminal, non-reducing beta-D-glucosyl residues with release of beta-D-glucose.. It functions in the pathway glycan metabolism; cellulose degradation. Functionally, beta-glucosidases are one of a number of cellulolytic enzymes involved in the degradation of cellulosic biomass. Catalyzes the last step releasing glucose from the inhibitory cellobiose. This chain is Probable beta-glucosidase F (bglF), found in Aspergillus oryzae (strain ATCC 42149 / RIB 40) (Yellow koji mold).